Reading from the N-terminus, the 180-residue chain is UPF0227 protein Spro_1925 (180 aa).

It belongs to the UPF0227 family.

The sequence is that of UPF0227 protein Spro_1925 from Serratia proteamaculans (strain 568).